The sequence spans 232 residues: LOB domain-containing protein 11 (232 aa).

Positions 1–50 (MLKMEINGGVATPTASAVAKVTETTTPVNSPSPTSSPPPPPSPQQPPQPP) are disordered. Residues 34–50 (TSSPPPPPSPQQPPQPP) are compositionally biased toward pro residues. The 102-residue stretch at 54–155 (SPCAACKILR…AQLAKTQVEL (102 aa)) folds into the LOB domain. The tract at residues 181-218 (EQGQQKMSFESSFESGDEFISSPDEESNDLGFLEDNNN) is disordered. The segment covering 188-202 (SFESSFESGDEFISS) has biased composition (low complexity).

This sequence belongs to the LOB domain-containing protein family. As to expression, expressed in young shoots, stems, leaves and flowers.

This is LOB domain-containing protein 11 (LBD11) from Arabidopsis thaliana (Mouse-ear cress).